We begin with the raw amino-acid sequence, 283 residues long: 4-diphosphocytidyl-2-C-methyl-D-erythritol kinase (283 aa).

Lys-10 is a catalytic residue. 99–109 serves as a coordination point for ATP; it reads PMGGGLGGGSS. Residue Asp-141 is part of the active site.

Belongs to the GHMP kinase family. IspE subfamily. As to quaternary structure, homodimer.

The enzyme catalyses 4-CDP-2-C-methyl-D-erythritol + ATP = 4-CDP-2-C-methyl-D-erythritol 2-phosphate + ADP + H(+). The protein operates within isoprenoid biosynthesis; isopentenyl diphosphate biosynthesis via DXP pathway; isopentenyl diphosphate from 1-deoxy-D-xylulose 5-phosphate: step 3/6. Functionally, catalyzes the phosphorylation of the position 2 hydroxy group of 4-diphosphocytidyl-2C-methyl-D-erythritol. The chain is 4-diphosphocytidyl-2-C-methyl-D-erythritol kinase from Salmonella paratyphi C (strain RKS4594).